Consider the following 100-residue polypeptide: UPF0248 protein APE_0939 (100 aa).

The protein belongs to the UPF0248 family.

This is UPF0248 protein APE_0939 from Aeropyrum pernix (strain ATCC 700893 / DSM 11879 / JCM 9820 / NBRC 100138 / K1).